We begin with the raw amino-acid sequence, 184 residues long: Large ribosomal subunit protein uL15 (184 aa).

Positions 1-50 (MDLSSLRPAKGAVKNKKRVGRGQGSGNGTTAGKGNKGQQARSGYKRPINE) are disordered. Residues 21 to 35 (RGQGSGNGTTAGKGN) are compositionally biased toward gly residues.

This sequence belongs to the universal ribosomal protein uL15 family. In terms of assembly, part of the 50S ribosomal subunit.

In terms of biological role, binds to the 23S rRNA. In Chlorobium luteolum (strain DSM 273 / BCRC 81028 / 2530) (Pelodictyon luteolum), this protein is Large ribosomal subunit protein uL15.